A 170-amino-acid chain; its full sequence is Large ribosomal subunit protein uL16 (170 aa).

It belongs to the universal ribosomal protein uL16 family.

The protein is Large ribosomal subunit protein uL16 of Methanoculleus marisnigri (strain ATCC 35101 / DSM 1498 / JR1).